A 293-amino-acid polypeptide reads, in one-letter code: Phosphoribosylaminoimidazole-succinocarboxamide synthase (293 aa).

This sequence belongs to the SAICAR synthetase family.

The enzyme catalyses 5-amino-1-(5-phospho-D-ribosyl)imidazole-4-carboxylate + L-aspartate + ATP = (2S)-2-[5-amino-1-(5-phospho-beta-D-ribosyl)imidazole-4-carboxamido]succinate + ADP + phosphate + 2 H(+). Its pathway is purine metabolism; IMP biosynthesis via de novo pathway; 5-amino-1-(5-phospho-D-ribosyl)imidazole-4-carboxamide from 5-amino-1-(5-phospho-D-ribosyl)imidazole-4-carboxylate: step 1/2. This Desulfosudis oleivorans (strain DSM 6200 / JCM 39069 / Hxd3) (Desulfococcus oleovorans) protein is Phosphoribosylaminoimidazole-succinocarboxamide synthase.